We begin with the raw amino-acid sequence, 371 residues long: Putative glutamate--cysteine ligase 2 (371 aa).

This sequence belongs to the glutamate--cysteine ligase type 2 family. YbdK subfamily.

It catalyses the reaction L-cysteine + L-glutamate + ATP = gamma-L-glutamyl-L-cysteine + ADP + phosphate + H(+). ATP-dependent carboxylate-amine ligase which exhibits weak glutamate--cysteine ligase activity. The chain is Putative glutamate--cysteine ligase 2 from Nitrosospira multiformis (strain ATCC 25196 / NCIMB 11849 / C 71).